A 448-amino-acid polypeptide reads, in one-letter code: tRNA(Ile)-lysidine synthase (448 aa).

25-30 (SGGSDS) serves as a coordination point for ATP.

The protein belongs to the tRNA(Ile)-lysidine synthase family.

The protein localises to the cytoplasm. It carries out the reaction cytidine(34) in tRNA(Ile2) + L-lysine + ATP = lysidine(34) in tRNA(Ile2) + AMP + diphosphate + H(+). Its function is as follows. Ligates lysine onto the cytidine present at position 34 of the AUA codon-specific tRNA(Ile) that contains the anticodon CAU, in an ATP-dependent manner. Cytidine is converted to lysidine, thus changing the amino acid specificity of the tRNA from methionine to isoleucine. The polypeptide is tRNA(Ile)-lysidine synthase (Brucella melitensis biotype 2 (strain ATCC 23457)).